A 352-amino-acid chain; its full sequence is D-alanine--D-alanine ligase (352 aa).

The ATP-grasp domain occupies 135–344 (KTVFAKAGLP…FPQLVDRLIE (210 aa)). 171-226 (EETLNYPCFVKPANLGSSVGIAKVRSRSELEKALDQAASYDRRIIVEAGVIAREVE) contacts ATP. D297, E311, and N313 together coordinate Mg(2+).

The protein belongs to the D-alanine--D-alanine ligase family. Mg(2+) is required as a cofactor. Mn(2+) serves as cofactor.

It is found in the cytoplasm. It carries out the reaction 2 D-alanine + ATP = D-alanyl-D-alanine + ADP + phosphate + H(+). The protein operates within cell wall biogenesis; peptidoglycan biosynthesis. In terms of biological role, cell wall formation. This chain is D-alanine--D-alanine ligase, found in Gloeothece citriformis (strain PCC 7424) (Cyanothece sp. (strain PCC 7424)).